Reading from the N-terminus, the 262-residue chain is Imidazole glycerol phosphate synthase subunit HisF (262 aa).

Active-site residues include D11 and D130.

It belongs to the HisA/HisF family. In terms of assembly, heterodimer of HisH and HisF.

It localises to the cytoplasm. It carries out the reaction 5-[(5-phospho-1-deoxy-D-ribulos-1-ylimino)methylamino]-1-(5-phospho-beta-D-ribosyl)imidazole-4-carboxamide + L-glutamine = D-erythro-1-(imidazol-4-yl)glycerol 3-phosphate + 5-amino-1-(5-phospho-beta-D-ribosyl)imidazole-4-carboxamide + L-glutamate + H(+). It functions in the pathway amino-acid biosynthesis; L-histidine biosynthesis; L-histidine from 5-phospho-alpha-D-ribose 1-diphosphate: step 5/9. Functionally, IGPS catalyzes the conversion of PRFAR and glutamine to IGP, AICAR and glutamate. The HisF subunit catalyzes the cyclization activity that produces IGP and AICAR from PRFAR using the ammonia provided by the HisH subunit. The sequence is that of Imidazole glycerol phosphate synthase subunit HisF from Rhodopirellula baltica (strain DSM 10527 / NCIMB 13988 / SH1).